The sequence spans 383 residues: GA-binding protein subunit beta-1 (383 aa).

Ser2 carries the post-translational modification N-acetylserine. 2 ANK repeats span residues 5 to 34 and 37 to 66; these read DLGK…PFTT and LGTS…SRDA. Lys69 carries the N6-acetyllysine modification. ANK repeat units follow at residues 70 to 99, 103 to 132, and 136 to 166; these read VDRT…DVNA, LKMT…DVHT, and FCKT…QINT. 2 positions are modified to N6-acetyllysine: Lys340 and Lys369.

As to quaternary structure, heterotetramer of two alpha and two beta subunits. Interacts with HCFC1, causing repression of transcriptional activity. Post-translationally, acetylated by EP300/p300. Deacetylated by SIRT7, promoting heterotetramerization and activity.

It is found in the nucleus. Its function is as follows. Transcription factor capable of interacting with purine rich repeats (GA repeats). Acts as a master regulator of nuclear-encoded mitochondrial genes. This is GA-binding protein subunit beta-1 (GABPB1) from Bos taurus (Bovine).